The following is a 151-amino-acid chain: 3-dehydroquinate dehydratase (151 aa).

Catalysis depends on Y24, which acts as the Proton acceptor. Substrate-binding residues include N76, H82, and D89. H102 serves as the catalytic Proton donor. Substrate is bound by residues 103-104 (VS) and R113.

It belongs to the type-II 3-dehydroquinase family. In terms of assembly, homododecamer.

It catalyses the reaction 3-dehydroquinate = 3-dehydroshikimate + H2O. It functions in the pathway metabolic intermediate biosynthesis; chorismate biosynthesis; chorismate from D-erythrose 4-phosphate and phosphoenolpyruvate: step 3/7. Its function is as follows. Catalyzes a trans-dehydration via an enolate intermediate. The protein is 3-dehydroquinate dehydratase of Rhodopseudomonas palustris (strain HaA2).